Reading from the N-terminus, the 428-residue chain is Adenylosuccinate synthetase (428 aa).

Residues 12–18 (GDEGKGK) and 40–42 (GHT) contribute to the GTP site. The Proton acceptor role is filled by aspartate 13. Aspartate 13 and glycine 40 together coordinate Mg(2+). Residues 13–16 (DEGK), 38–41 (NAGH), threonine 129, arginine 143, glutamine 224, threonine 239, and arginine 303 contribute to the IMP site. The Proton donor role is filled by histidine 41. 299–305 (VTTGRIR) is a binding site for substrate. GTP is bound by residues arginine 305, 331 to 333 (KVD), and 410 to 412 (AYG).

The protein belongs to the adenylosuccinate synthetase family. In terms of assembly, homodimer. Mg(2+) is required as a cofactor.

The protein resides in the cytoplasm. It carries out the reaction IMP + L-aspartate + GTP = N(6)-(1,2-dicarboxyethyl)-AMP + GDP + phosphate + 2 H(+). Its pathway is purine metabolism; AMP biosynthesis via de novo pathway; AMP from IMP: step 1/2. In terms of biological role, plays an important role in the de novo pathway of purine nucleotide biosynthesis. Catalyzes the first committed step in the biosynthesis of AMP from IMP. The chain is Adenylosuccinate synthetase from Francisella tularensis subsp. novicida (strain U112).